Consider the following 266-residue polypeptide: GTP cyclohydrolase FolE2 (266 aa).

The protein belongs to the GTP cyclohydrolase IV family.

The catalysed reaction is GTP + H2O = 7,8-dihydroneopterin 3'-triphosphate + formate + H(+). Its pathway is cofactor biosynthesis; 7,8-dihydroneopterin triphosphate biosynthesis; 7,8-dihydroneopterin triphosphate from GTP: step 1/1. In terms of biological role, converts GTP to 7,8-dihydroneopterin triphosphate. The protein is GTP cyclohydrolase FolE2 of Syntrophotalea carbinolica (strain DSM 2380 / NBRC 103641 / GraBd1) (Pelobacter carbinolicus).